The primary structure comprises 310 residues: UDP-N-acetylenolpyruvoylglucosamine reductase (310 aa).

Positions 31–216 (KIGGPADYFV…LRKIEELNQA (186 aa)) constitute an FAD-binding PCMH-type domain. Residue Arg-180 is part of the active site. Ser-230 functions as the Proton donor in the catalytic mechanism. Glu-300 is an active-site residue.

It belongs to the MurB family. FAD serves as cofactor.

It localises to the cytoplasm. The catalysed reaction is UDP-N-acetyl-alpha-D-muramate + NADP(+) = UDP-N-acetyl-3-O-(1-carboxyvinyl)-alpha-D-glucosamine + NADPH + H(+). It functions in the pathway cell wall biogenesis; peptidoglycan biosynthesis. In terms of biological role, cell wall formation. The chain is UDP-N-acetylenolpyruvoylglucosamine reductase from Lachnoclostridium phytofermentans (strain ATCC 700394 / DSM 18823 / ISDg) (Clostridium phytofermentans).